A 182-amino-acid polypeptide reads, in one-letter code: Dipetalodipin (182 aa).

Residues 1–18 (MKTIIAAIFLGILMHAFA) form the signal peptide. Cystine bridges form between cysteine 21/cysteine 134, cysteine 55/cysteine 181, and cysteine 87/cysteine 103.

This sequence belongs to the calycin superfamily. Triabin family. Expressed in salivary glands.

It localises to the secreted. Its function is as follows. Inhibits platelet aggregation, vasoconstriction, and angiogenesis through binding to distinct eicosanoids involved in inflammation (acts as a scavenger), and has a role in inhibiting host innate immunity by impairing platelet-assisted formation of neutrophil extracellular traps (NETs). Inhibits platelet aggregation by collagen (IC(50)=30 nM), thromboxane A2 mimetic (TXA2 mimetic), or arachidonic acid (AA) without affecting aggregation induced by ADP, convulxin (GP6 agonist), PMA, and ristocetin (vWF-dependent platelet agglutinator). Binds with high affinity to TXA2, TXB2, prostaglandine H2 mimetic (PGH2 mimetic), PGD2, PGJ2, and PGF2alpha. Also interacts with 15(S)-hydroxyeicosatetraenoic acid (HETE), being the first calycin/lipocalin described to date to bind to a derivative of 15-lipoxygenase. Binding is not observed to other prostaglandins, leukotrienes, HETEs, lipids, and biogenic amines. It prevents contraction of rat uterus stimulated by PGF2alpha and induces relaxation of aorta previously contracted with TXA2 mimetic. In addition, it inhibits angiogenesis mediated by 15(S)-HETE and does not enhance inhibition of collagen-induced platelet aggregation by SQ29548 (TXA2 antagonist) and indomethacin. Also impairs platelet-assisted formation of neutrophil extracellular traps (NETs). NETs are web-like structures of DNA and proteins that play an important role in killing of pathogens. In addition, NETs are implicated in thrombus formation. In vivo, this protein exhibits antithrombotic activity in two distinct mice models that are highly dependent on platelets. It is noteworthy that it inhibits thrombosis without promoting excessive bleeding. The polypeptide is Dipetalodipin (Dipetalogaster maximus (Blood-sucking bug)).